A 238-amino-acid polypeptide reads, in one-letter code: Uridylate kinase (238 aa).

Position 12-15 (12-15) interacts with ATP; the sequence is KLSG. Residue Gly54 coordinates UMP. 2 residues coordinate ATP: Gly55 and Arg59. UMP is bound by residues Asp74 and 135–142; that span reads TGNPFFTT. ATP-binding residues include Thr162, Tyr168, and Asp171.

Belongs to the UMP kinase family. Homohexamer.

The protein localises to the cytoplasm. The catalysed reaction is UMP + ATP = UDP + ADP. The protein operates within pyrimidine metabolism; CTP biosynthesis via de novo pathway; UDP from UMP (UMPK route): step 1/1. Its activity is regulated as follows. Inhibited by UTP. In terms of biological role, catalyzes the reversible phosphorylation of UMP to UDP. This is Uridylate kinase from Bordetella parapertussis (strain 12822 / ATCC BAA-587 / NCTC 13253).